We begin with the raw amino-acid sequence, 316 residues long: Formimidoylglutamase (316 aa).

6 residues coordinate Mn(2+): His127, Asp156, His158, Asp160, Asp247, and Asp249.

It belongs to the arginase family. Mn(2+) serves as cofactor.

It carries out the reaction N-formimidoyl-L-glutamate + H2O = formamide + L-glutamate. Its pathway is amino-acid degradation; L-histidine degradation into L-glutamate; L-glutamate from N-formimidoyl-L-glutamate (hydrolase route): step 1/1. Catalyzes the conversion of N-formimidoyl-L-glutamate to L-glutamate and formamide. This Cupriavidus pinatubonensis (strain JMP 134 / LMG 1197) (Cupriavidus necator (strain JMP 134)) protein is Formimidoylglutamase.